The sequence spans 375 residues: Ribosomal RNA large subunit methyltransferase G (375 aa).

Belongs to the methyltransferase superfamily. RlmG family.

It localises to the cytoplasm. It catalyses the reaction guanosine(1835) in 23S rRNA + S-adenosyl-L-methionine = N(2)-methylguanosine(1835) in 23S rRNA + S-adenosyl-L-homocysteine + H(+). Its function is as follows. Specifically methylates the guanine in position 1835 (m2G1835) of 23S rRNA. The protein is Ribosomal RNA large subunit methyltransferase G of Stutzerimonas stutzeri (strain A1501) (Pseudomonas stutzeri).